A 2335-amino-acid chain; its full sequence is MAGVFPYRGPGNPVPGPLAPLPDYMSEEKLQEKARKWQQLQAKRYAEKRKFGFVDAQKEDMPPEHVRKIIRDHGDMTNRKFRHDKRVYLGALKYMPHAVLKLLENMPMPWEQIRDVPVLYHITGAISFVNEIPWVIEPVYISQWGSMWIMMRREKRDRRHFKRMRFPPFDDEEPPLDYADNILDVEPLEAIQLELDPEEDAPVLDWFYDHQPLRDSRKYVNGSTYQRWQFTLPMMSTLYRLANQLLTDLVDDNYFYLFDLKAFFTSKALNMAIPGGPKFEPLVRDINLQDEDWNEFNDINKIIIRQPIRTEYKIAFPYLYNNLPHHVHLTWYHTPNVVFIKTEDPDLPAFYFDPLINPISHRHSVKSQEPLPDDDEEFELPEFVEPFLKDTPLYTDNTANGIALLWAPRPFNLRSGRTRRALDIPLVKNWYREHCPAGQPVKVRVSYQKLLKYYVLNALKHRPPKAQKKRYLFRSFKATKFFQSTKLDWVEVGLQVCRQGYNMLNLLIHRKNLNYLHLDYNFNLKPVKTLTTKERKKSRFGNAFHLCREVLRLTKLVVDSHVQYRLGNVDAFQLADGLQYIFAHVGQLTGMYRYKYKLMRQIRMCKDLKHLIYYRFNTGPVGKGPGCGFWAAGWRVWLFFMRGITPLLERWLGNLLARQFEGRHSKGVAKTVTKQRVESHFDLELRAAVMHDILDMMPEGIKQNKARTILQHLSEAWRCWKANIPWKVPGLPTPIENMILRYVKAKADWWTNTAHYNRERIRRGATVDKTVCKKNLGRLTRLYLKAEQERQHNYLKDGPYITAEEAVAVYTTTVHWLESRRFSPIPFPPLSYKHDTKLLILALERLKEAYSVKSRLNQSQREELGLIEQAYDNPHEALSRIKRHLLTQRAFKEVGIEFMDLYSHLVPVYDVEPLEKITDAYLDQYLWYEADKRRLFPPWIKPADTEPPPLLVYKWCQGINNLQDVWETSEGECNVMLESRFEKMYEKIDLTLLNRLLRLIVDHNIADYMTAKNNVVINYKDMNHTNSYGIIRGLQFASFIVQYYGLVMDLLVLGLHRASEMAGPPQMPNDFLSFQDIATEAAHPIRLFCRYIDRIHIFFRFTADEARDLIQRYLTEHPDPNNENIVGYNNKKCWPRDARMRLMKHDVNLGRAVFWDIKNRLPRSVTTVQWENSFVSVYSKDNPNLLFNMCGFECRILPKCRTSYEEFTHKDGVWNLQNEVTKERTAQCFLRVDDESMQRFHNRVRQILMASGSTTFTKIVNKWNTALIGLMTYFREAVVNTQELLDLLVKCENKIQTRIKIGLNSKMPSRFPPVVFYTPKELGGLGMLSMGHVLIPQSDLRWSKQTDVGITHFRSGMSHEEDQLIPNLYRYIQPWESEFIDSQRVWAEYALKRQEAIAQNRRLTLEDLEDSWDRGIPRINTLFQKDRHTLAYDKGWRVRTDFKQYQVLKQNPFWWTHQRHDGKLWNLNNYRTDMIQALGGVEGILEHTLFKGTYFPTWEGLFWEKASGFEESMKWKKLTNAQRSGLNQIPNRRFTLWWSPTINRANVYVGFQVQLDLTGIFMHGKIPTLKISLIQIFRAHLWQKIHESIVMDLCQVFDQELDALEIETVQKETIHPRKSYKMNSSCADILLFASYKWNVSRPSLLADSKDVMDSTTTQKYWIDIQLRWGDYDSHDIERYARAKFLDYTTDNMSIYPSPTGVLIAIDLAYNLHSAYGNWFPGSKPLIQQAMAKIMKANPALYVLRERIRKGLQLYSSEPTEPYLSSQNYGELFSNQIIWFVDDTNVYRVTIHKTFEGNLTTKPINGAIFIFNPRTGQLFLKIIHTSVWAGQKRLGQLAKWKTAEEVAALIRSLPVEEQPKQIIVTRKGMLDPLEVHLLDFPNIVIKGSELQLPFQACLKVEKFGDLILKATEPQMVLFNLYDDWLKTISSYTAFSRLILILRALHVNNDRAKVILKPDKTTITEPHHIWPTLTDEEWIKVEVQLKDLILADYGKKNNVNVASLTQSEIRDIILGMEISAPSQQRQQIAEIEKQTKEQSQLTATQTRTVNKHGDEIITSTTSNYETQTFSSKTEWRVRAISAANLHLRTNHIYVSSDDIKETGYTYILPKNVLKKFICISDLRAQIAGYLYGVSPPDNPQVKEIRCIVMVPQWGTHQTVHLPGQLPQHEYLKEMEPLGWIHTQPNESPQLSPQDVTTHAKIMADNPSWDGEKTIIITCSFTPGSCTLTAYKLTPSGYEWGRQNTDKGNNPKGYLPSHYERVQMLLSDRFLGFFMVPAQSSWNYNFMGVRHDPNMKYELQLANPKEFYHEVHRPSHFLNFALLQEGEVYSADREDLYA.

An N-acetylalanine modification is found at alanine 2. The segment at 812–1303 (TTVHWLESRR…KIQTRIKIGL (492 aa)) is reverse transcriptase homology domain. Serine 859 and serine 1358 each carry phosphoserine. A linker region spans residues 1304 to 1577 (NSKMPSRFPP…TLKISLIQIF (274 aa)). Position 1425 is an N6,N6-dimethyllysine (lysine 1425). N6-acetyllysine is present on lysine 1463. Positions 1513-1526 (MKWKKLTNAQRSGL) are important for branch point selection. A restriction endonuclease homology domain region spans residues 1581 to 1752 (LWQKIHESIV…LRERIRKGLQ (172 aa)). Residues 1669-2034 (GDYDSHDIER…QIAEIEKQTK (366 aa)) are involved in interaction with pre-mRNA 5' splice site. Residues 1767–2020 (NYGELFSNQI…ILGMEISAPS (254 aa)) are RNase H homology domain. The region spanning 2103-2234 (TYILPKNVLK…LTAYKLTPSG (132 aa)) is the MPN domain. Positions 2301–2335 (PKEFYHEVHRPSHFLNFALLQEGEVYSADREDLYA) are required for interaction with EFTUD2 and SNRNP200.

As to quaternary structure, part of the U5 snRNP complex. Component of the U4/U6-U5 tri-snRNP complex composed of the U4, U6 and U5 snRNAs and at least PRPF3, PRPF4, PRPF6, PRPF8, PRPF31, SNRNP200, TXNL4A, SNRNP40, DDX23, CD2BP2, PPIH, SNU13, EFTUD2, SART1 and USP39. Component of the U5.U4atac/U6atac snRNP complexes in U12-dependent spliceosomes. Within the minor spliceosome, which acts on U12-type introns, interacts with PPIL2 and RBM48. Core component of U2-type precatalytic, catalytic and postcatalytic spliceosomal complexes. Found in a mRNA splicing-dependent exon junction complex (EJC) with SRRM1. Interacts with U5 snRNP proteins SNRP116 and SNRNP40. Interacts with EFTUD2. Interacts (via the MPN (JAB/Mov34) domain) with PRPF3 ('Lys-63'-linked polyubiquitinated); may stabilize the U4/U6-U5 tri-snRNP complex. Interacts (via RNase H homology domain) with AAR2. Interacts with RPAP3 and URI1 in a ZNHIT2-dependent manner. Interacts with C9orf78. Interacts with SNRNP200; the interaction is direct. Interacts with TSSC4; the interaction is direct. Widely expressed.

The protein localises to the nucleus. It localises to the nucleus speckle. Plays a role in pre-mRNA splicing as core component of precatalytic, catalytic and postcatalytic spliceosomal complexes, both of the predominant U2-type spliceosome and the minor U12-type spliceosome. Functions as a scaffold that mediates the ordered assembly of spliceosomal proteins and snRNAs. Required for the assembly of the U4/U6-U5 tri-snRNP complex, a building block of the spliceosome. Functions as a scaffold that positions spliceosomal U2, U5 and U6 snRNAs at splice sites on pre-mRNA substrates, so that splicing can occur. Interacts with both the 5' and the 3' splice site. The protein is Pre-mRNA-processing-splicing factor 8 (PRPF8) of Homo sapiens (Human).